Here is a 209-residue protein sequence, read N- to C-terminus: Uracil phosphoribosyltransferase (209 aa).

5-phospho-alpha-D-ribose 1-diphosphate-binding positions include R79, R104, and D131–S139. Uracil-binding positions include I194 and G199–A201. D200 provides a ligand contact to 5-phospho-alpha-D-ribose 1-diphosphate.

The protein belongs to the UPRTase family. Mg(2+) is required as a cofactor.

The enzyme catalyses UMP + diphosphate = 5-phospho-alpha-D-ribose 1-diphosphate + uracil. It participates in pyrimidine metabolism; UMP biosynthesis via salvage pathway; UMP from uracil: step 1/1. With respect to regulation, allosterically activated by GTP. Functionally, catalyzes the conversion of uracil and 5-phospho-alpha-D-ribose 1-diphosphate (PRPP) to UMP and diphosphate. The polypeptide is Uracil phosphoribosyltransferase (Clostridioides difficile (strain 630) (Peptoclostridium difficile)).